The sequence spans 237 residues: Ribonuclease PH (237 aa).

Phosphate-binding positions include Arg-86 and 124–126; that span reads GTR.

This sequence belongs to the RNase PH family. As to quaternary structure, homohexameric ring arranged as a trimer of dimers.

The enzyme catalyses tRNA(n+1) + phosphate = tRNA(n) + a ribonucleoside 5'-diphosphate. In terms of biological role, phosphorolytic 3'-5' exoribonuclease that plays an important role in tRNA 3'-end maturation. Removes nucleotide residues following the 3'-CCA terminus of tRNAs; can also add nucleotides to the ends of RNA molecules by using nucleoside diphosphates as substrates, but this may not be physiologically important. Probably plays a role in initiation of 16S rRNA degradation (leading to ribosome degradation) during starvation. The protein is Ribonuclease PH of Idiomarina loihiensis (strain ATCC BAA-735 / DSM 15497 / L2-TR).